Consider the following 339-residue polypeptide: tRNA(Ile)-lysidine synthase (339 aa).

Residue 34–39 (SGGPDS) coordinates ATP.

It belongs to the tRNA(Ile)-lysidine synthase family.

Its subcellular location is the cytoplasm. The enzyme catalyses cytidine(34) in tRNA(Ile2) + L-lysine + ATP = lysidine(34) in tRNA(Ile2) + AMP + diphosphate + H(+). Its function is as follows. Ligates lysine onto the cytidine present at position 34 of the AUA codon-specific tRNA(Ile) that contains the anticodon CAU, in an ATP-dependent manner. Cytidine is converted to lysidine, thus changing the amino acid specificity of the tRNA from methionine to isoleucine. The protein is tRNA(Ile)-lysidine synthase of Methylobacterium nodulans (strain LMG 21967 / CNCM I-2342 / ORS 2060).